Reading from the N-terminus, the 302-residue chain is Dioxygenase ALT11 (302 aa).

The interval 1–22 (MSSPELPSQMGVPNGHTKLQEV) is disordered. Fe cation-binding residues include His147, Asp149, and His223.

Belongs to the PhyH family. As to quaternary structure, homodimer. It depends on Fe cation as a cofactor.

The protein operates within mycotoxin biosynthesis. Functionally, dioxygenase; part of the gene cluster that mediates the biosynthesis of the host-selective toxins (HSTs) AAL-toxins, sphinganine-analog mycotoxins responsible for Alternaria stem canker on tomato by the tomato pathotype. The biosynthesis starts with the polyketide synthase ALT1-catalyzed C-16 carbon chain assembly from one starter acetyl-CoA unit with malonyl-CoA extender units. ALT1 also selectively transfers methyl groups at the first and the third cycle of chain elongation for AAL toxin. The C-16 polyketide chain is released from the enzyme by a nucleophilic attack of a carbanion, which is derived from R-carbon of glycin by decarboxylation, on the carbonyl carbon of polyketide acyl chain. This step is probably catalyzed by a pyridoxal 5'-phosphate-dependent aminoacyl transferase ALT4. The respective functions of the other enzymes encoded by the cluster have still to be elucidated. The sphingosine N-acyltransferase-like protein ALT7 seems not to act as a resistance/self-tolerance factor against the toxin in the toxin biosynthetic gene cluster, contrary to what is expected. This chain is Dioxygenase ALT11, found in Alternaria alternata (Alternaria rot fungus).